Consider the following 534-residue polypeptide: Glucans biosynthesis protein D (534 aa).

A signal peptide (tat-type signal) is located at residues 1-26; it reads MQRRDFIRNASLALAAFGLPSLPACA.

Belongs to the OpgD/OpgG family. In terms of processing, predicted to be exported by the Tat system. The position of the signal peptide cleavage has not been experimentally proven.

It is found in the periplasm. Its pathway is glycan metabolism; osmoregulated periplasmic glucan (OPG) biosynthesis. Its function is as follows. Probably involved in the control of the structural glucose backbone of osmoregulated periplasmic glucans (OPGs). This chain is Glucans biosynthesis protein D, found in Stenotrophomonas maltophilia (strain K279a).